Here is a 228-residue protein sequence, read N- to C-terminus: Probable septum site-determining protein MinC (228 aa).

This sequence belongs to the MinC family. Interacts with MinD and FtsZ.

In terms of biological role, cell division inhibitor that blocks the formation of polar Z ring septums. Rapidly oscillates between the poles of the cell to destabilize FtsZ filaments that have formed before they mature into polar Z rings. Prevents FtsZ polymerization. In Symbiobacterium thermophilum (strain DSM 24528 / JCM 14929 / IAM 14863 / T), this protein is Probable septum site-determining protein MinC.